The following is a 373-amino-acid chain: UDP-glucose 4-epimerase 3 (373 aa).

NAD(+) is bound at residue serine 27–phenylalanine 58. Serine 153 contacts substrate. Tyrosine 177 (proton acceptor) is an active-site residue.

The protein belongs to the NAD(P)-dependent epimerase/dehydratase family. NAD(+) is required as a cofactor.

It carries out the reaction UDP-alpha-D-glucose = UDP-alpha-D-galactose. The protein operates within carbohydrate metabolism; galactose metabolism. Functionally, catalyzes the interconversion between UDP-glucose and UDP-galactose. The sequence is that of UDP-glucose 4-epimerase 3 (UGE-3) from Oryza sativa subsp. japonica (Rice).